The following is a 155-amino-acid chain: Transcriptional repressor NrdR (155 aa).

Over residues 1–11 (MECPNCHQNAS) the composition is skewed to polar residues. The disordered stretch occupies residues 1 to 22 (MECPNCHQNASRVIDSRPSDEN). The segment at 3 to 34 (CPNCHQNASRVIDSRPSDENRAIRRRRECENC) is a zinc-finger region. In terms of domain architecture, ATP-cone spans 49–139 (LLVVKNDGTR…IYREFKDMSS (91 aa)).

It belongs to the NrdR family. Zn(2+) serves as cofactor.

Functionally, negatively regulates transcription of bacterial ribonucleotide reductase nrd genes and operons by binding to NrdR-boxes. The protein is Transcriptional repressor NrdR of Lactobacillus acidophilus (strain ATCC 700396 / NCK56 / N2 / NCFM).